We begin with the raw amino-acid sequence, 325 residues long: NADH-quinone oxidoreductase subunit H (325 aa).

8 consecutive transmembrane segments (helical) span residues 11–31, 81–101, 114–134, 154–174, 186–206, 237–257, 265–285, and 304–324; these read ILLT…CGAF, FIFT…FAIV, IGIL…LFAG, VSYE…AGSF, MWNI…GVAV, FFVG…TLFF, LPSF…FILI, and ICLP…LYNA.

It belongs to the complex I subunit 1 family. In terms of assembly, NDH-1 is composed of 13 different subunits. Subunits NuoA, H, J, K, L, M, N constitute the membrane sector of the complex.

It is found in the cell inner membrane. It catalyses the reaction a quinone + NADH + 5 H(+)(in) = a quinol + NAD(+) + 4 H(+)(out). Its function is as follows. NDH-1 shuttles electrons from NADH, via FMN and iron-sulfur (Fe-S) centers, to quinones in the respiratory chain. The immediate electron acceptor for the enzyme in this species is believed to be ubiquinone. Couples the redox reaction to proton translocation (for every two electrons transferred, four hydrogen ions are translocated across the cytoplasmic membrane), and thus conserves the redox energy in a proton gradient. This subunit may bind ubiquinone. This chain is NADH-quinone oxidoreductase subunit H, found in Proteus mirabilis (strain HI4320).